The chain runs to 134 residues: Small ribosomal subunit protein uS11 (134 aa).

This sequence belongs to the universal ribosomal protein uS11 family. As to quaternary structure, part of the 30S ribosomal subunit. Interacts with proteins S7 and S18. Binds to IF-3.

In terms of biological role, located on the platform of the 30S subunit, it bridges several disparate RNA helices of the 16S rRNA. Forms part of the Shine-Dalgarno cleft in the 70S ribosome. This Paraburkholderia xenovorans (strain LB400) protein is Small ribosomal subunit protein uS11.